A 353-amino-acid polypeptide reads, in one-letter code: D-alanine--D-alanine ligase (353 aa).

An ATP-grasp domain is found at 141–349 (KAALAGAGLA…LEQLVHELLE (209 aa)). 176-231 (ESGLCYPCFIKPANLGSSVGISKARNREELIHGLRLAATLDPRLVVEQGVQARELE) provides a ligand contact to ATP. Mg(2+)-binding residues include Asp302, Glu316, and Asn318.

This sequence belongs to the D-alanine--D-alanine ligase family. Mg(2+) serves as cofactor. Requires Mn(2+) as cofactor.

It localises to the cytoplasm. The catalysed reaction is 2 D-alanine + ATP = D-alanyl-D-alanine + ADP + phosphate + H(+). Its pathway is cell wall biogenesis; peptidoglycan biosynthesis. Functionally, cell wall formation. This Parasynechococcus marenigrum (strain WH8102) protein is D-alanine--D-alanine ligase.